A 94-amino-acid polypeptide reads, in one-letter code: Large ribosomal subunit protein uL23 (94 aa).

Belongs to the universal ribosomal protein uL23 family. As to quaternary structure, part of the 50S ribosomal subunit. Contacts protein L29, and trigger factor when it is bound to the ribosome.

One of the early assembly proteins it binds 23S rRNA. One of the proteins that surrounds the polypeptide exit tunnel on the outside of the ribosome. Forms the main docking site for trigger factor binding to the ribosome. The sequence is that of Large ribosomal subunit protein uL23 from Mycoplasma mycoides subsp. mycoides SC (strain CCUG 32753 / NCTC 10114 / PG1).